The chain runs to 304 residues: tRNA dimethylallyltransferase (304 aa).

16-23 lines the ATP pocket; the sequence is GPTASGKS. A substrate-binding site is contributed by 18 to 23; it reads TASGKS. Interaction with substrate tRNA stretches follow at residues 41–44 and 165–169; these read DSMQ and QRIIR.

The protein belongs to the IPP transferase family. As to quaternary structure, monomer. Mg(2+) is required as a cofactor.

The catalysed reaction is adenosine(37) in tRNA + dimethylallyl diphosphate = N(6)-dimethylallyladenosine(37) in tRNA + diphosphate. Catalyzes the transfer of a dimethylallyl group onto the adenine at position 37 in tRNAs that read codons beginning with uridine, leading to the formation of N6-(dimethylallyl)adenosine (i(6)A). The polypeptide is tRNA dimethylallyltransferase (Allorhizobium ampelinum (strain ATCC BAA-846 / DSM 112012 / S4) (Agrobacterium vitis (strain S4))).